Consider the following 249-residue polypeptide: Probable transcriptional regulatory protein Dtur_1615 (249 aa).

It belongs to the TACO1 family.

It is found in the cytoplasm. This Dictyoglomus turgidum (strain DSM 6724 / Z-1310) protein is Probable transcriptional regulatory protein Dtur_1615.